A 504-amino-acid chain; its full sequence is Maturase K (504 aa).

This sequence belongs to the intron maturase 2 family. MatK subfamily.

It is found in the plastid. Its subcellular location is the chloroplast. Functionally, usually encoded in the trnK tRNA gene intron. Probably assists in splicing its own and other chloroplast group II introns. This chain is Maturase K, found in Fagus japonica (Japanese beech).